Reading from the N-terminus, the 311-residue chain is 4-hydroxy-tetrahydrodipicolinate synthase (311 aa).

Pyruvate is bound at residue threonine 51. Tyrosine 140 serves as the catalytic Proton donor/acceptor. Lysine 168 (schiff-base intermediate with substrate) is an active-site residue. Position 209 (isoleucine 209) interacts with pyruvate.

The protein belongs to the DapA family. In terms of assembly, homotetramer; dimer of dimers.

It is found in the cytoplasm. It catalyses the reaction L-aspartate 4-semialdehyde + pyruvate = (2S,4S)-4-hydroxy-2,3,4,5-tetrahydrodipicolinate + H2O + H(+). It functions in the pathway amino-acid biosynthesis; L-lysine biosynthesis via DAP pathway; (S)-tetrahydrodipicolinate from L-aspartate: step 3/4. Functionally, catalyzes the condensation of (S)-aspartate-beta-semialdehyde [(S)-ASA] and pyruvate to 4-hydroxy-tetrahydrodipicolinate (HTPA). This Streptococcus suis (strain 98HAH33) protein is 4-hydroxy-tetrahydrodipicolinate synthase.